Reading from the N-terminus, the 175-residue chain is Two-on-two hemoglobin-3 (175 aa).

Heme contacts are provided by Tyr-85 and His-98. Residues 153 to 175 (QNEKPKHKPQCACKHAANKPAEE) form a disordered region.

This sequence belongs to the truncated hemoglobin family. Group II subfamily. Homodimer when ferric. Interacts with RGLG3 and RGLG4. It depends on heme as a cofactor. Expressed ubiquitously, with higher levels in root tissue than in shoot tissue.

Its function is as follows. Hemoglobin-like protein that exhibits an unusual concentration-independent binding of O(2) and CO. May promote shoot organogenesis from root explants in vitro. Inhibits RGLG3 and RGLG4 ubiquitination activity. This chain is Two-on-two hemoglobin-3 (GLB3), found in Arabidopsis thaliana (Mouse-ear cress).